Reading from the N-terminus, the 351-residue chain is Nicotinate-nucleotide--dimethylbenzimidazole phosphoribosyltransferase (351 aa).

The active-site Proton acceptor is E317.

This sequence belongs to the CobT family.

It carries out the reaction 5,6-dimethylbenzimidazole + nicotinate beta-D-ribonucleotide = alpha-ribazole 5'-phosphate + nicotinate + H(+). It participates in nucleoside biosynthesis; alpha-ribazole biosynthesis; alpha-ribazole from 5,6-dimethylbenzimidazole: step 1/2. Its function is as follows. Catalyzes the synthesis of alpha-ribazole-5'-phosphate from nicotinate mononucleotide (NAMN) and 5,6-dimethylbenzimidazole (DMB). The polypeptide is Nicotinate-nucleotide--dimethylbenzimidazole phosphoribosyltransferase (Pseudomonas aeruginosa (strain UCBPP-PA14)).